Consider the following 260-residue polypeptide: Carbonic anhydrase 2 (260 aa).

The residue at position 2 (Ser2) is an N-acetylserine. A Phosphoserine modification is found at Ser2. An Alpha-carbonic anhydrase domain is found at 3–259; that stretch reads HHWGYSKHNG…LKNRKIKASF (257 aa). His64 (proton acceptor) is an active-site residue. Asn67 is a catalytic residue. At Ser87 the chain carries Phosphoserine. Residues His94, His96, and His119 each contribute to the Zn(2+) site. Residue Tyr127 is part of the active site. Ser165 is modified (phosphoserine). 198–199 lines the substrate pocket; the sequence is TT.

It belongs to the alpha-carbonic anhydrase family. In terms of assembly, interacts with SLC4A4. Interaction with SLC4A7 regulates SLC4A7 transporter activity. Interacts with SLC26A6. It depends on Zn(2+) as a cofactor.

The protein resides in the cytoplasm. It localises to the cell membrane. It carries out the reaction hydrogencarbonate + H(+) = CO2 + H2O. It catalyses the reaction urea = cyanamide + H2O. Inhibited by acetazolamide. Its function is as follows. Catalyzes the reversible hydration of carbon dioxide. Can also hydrate cyanamide to urea. Involved in the regulation of fluid secretion into the anterior chamber of the eye. Essential for bone resorption and osteoclast differentiation. Contributes to intracellular pH regulation in the duodenal upper villous epithelium during proton-coupled peptide absorption. Stimulates the chloride-bicarbonate exchange activity of SLC26A6. The chain is Carbonic anhydrase 2 (Ca2) from Mus musculus (Mouse).